Here is a 396-residue protein sequence, read N- to C-terminus: Dihydrolipoyllysine-residue acetyltransferase component of pyruvate dehydrogenase complex (396 aa).

The 69-residue stretch at 1 to 69 (MPDIGLEEVE…KTDALIMRCE (69 aa)) folds into the Lipoyl-binding domain. Lys35 is modified (N6-lipoyllysine). The Peripheral subunit-binding (PSBD) domain maps to 104-141 (HATPLIRRLARNLNINLYDVVGTGPKNRILKEDLDLYQ). Residue His369 is part of the active site.

The protein belongs to the 2-oxoacid dehydrogenase family. As to quaternary structure, forms a 24-polypeptide structural core with octahedral symmetry. (R)-lipoate is required as a cofactor.

The enzyme catalyses N(6)-[(R)-dihydrolipoyl]-L-lysyl-[protein] + acetyl-CoA = N(6)-[(R)-S(8)-acetyldihydrolipoyl]-L-lysyl-[protein] + CoA. Functionally, the pyruvate dehydrogenase complex catalyzes the overall conversion of pyruvate to acetyl-CoA and CO(2). It contains multiple copies of three enzymatic components: pyruvate dehydrogenase (E1), dihydrolipoamide acetyltransferase (E2) and lipoamide dehydrogenase (E3). This is Dihydrolipoyllysine-residue acetyltransferase component of pyruvate dehydrogenase complex (aceF) from Buchnera aphidicola subsp. Acyrthosiphon pisum (strain APS) (Acyrthosiphon pisum symbiotic bacterium).